The following is a 154-amino-acid chain: Superoxide dismutase [Cu-Zn] (154 aa).

Cu cation contacts are provided by H47, H49, and H64. C58 and C147 are joined by a disulfide. Zn(2+) contacts are provided by H64, H72, H81, and D84. H121 contacts Cu cation. Positions 122–143 (GGTDDLGKGGNEESLKTGNAGP) are disordered. Over residues 123 to 136 (GTDDLGKGGNEESL) the composition is skewed to basic and acidic residues. A substrate-binding site is contributed by R144.

It belongs to the Cu-Zn superoxide dismutase family. Homodimer. Cu cation serves as cofactor. It depends on Zn(2+) as a cofactor.

The protein resides in the cytoplasm. The catalysed reaction is 2 superoxide + 2 H(+) = H2O2 + O2. In terms of biological role, destroys radicals which are normally produced within the cells and which are toxic to biological systems. The polypeptide is Superoxide dismutase [Cu-Zn] (SOD1) (Cordyceps militaris (Caterpillar fungus)).